A 117-amino-acid polypeptide reads, in one-letter code: Large ribosomal subunit protein bL19 (117 aa).

This sequence belongs to the bacterial ribosomal protein bL19 family.

Its function is as follows. This protein is located at the 30S-50S ribosomal subunit interface and may play a role in the structure and function of the aminoacyl-tRNA binding site. This is Large ribosomal subunit protein bL19 from Bacteroides thetaiotaomicron (strain ATCC 29148 / DSM 2079 / JCM 5827 / CCUG 10774 / NCTC 10582 / VPI-5482 / E50).